Consider the following 413-residue polypeptide: L-cysteine:1D-myo-inositol 2-amino-2-deoxy-alpha-D-glucopyranoside ligase (413 aa).

The segment at 1-21 is disordered; it reads MQSWSDTALPSVPGQGPPLRL. Cys-43 lines the Zn(2+) pocket. Residues 43–46, Thr-58, and 81–83 contribute to the L-cysteinyl-5'-AMP site; these read CGIT and NVT. A 'HIGH' region motif is present at residues 45 to 55; it reads ITPYDATHLGH. The short motif at 187–192 is the 'ERGGDP' region element; that stretch reads ERGGDP. Trp-227 contributes to the L-cysteinyl-5'-AMP binding site. Residue Cys-231 participates in Zn(2+) binding. Residue 249 to 251 participates in L-cysteinyl-5'-AMP binding; sequence GSD. His-256 is a Zn(2+) binding site. Ile-283 contacts L-cysteinyl-5'-AMP. Positions 289-293 match the 'KMSKS' region motif; the sequence is KMSKS.

Belongs to the class-I aminoacyl-tRNA synthetase family. MshC subfamily. As to quaternary structure, monomer. Requires Zn(2+) as cofactor.

It catalyses the reaction 1D-myo-inositol 2-amino-2-deoxy-alpha-D-glucopyranoside + L-cysteine + ATP = 1D-myo-inositol 2-(L-cysteinylamino)-2-deoxy-alpha-D-glucopyranoside + AMP + diphosphate + H(+). In terms of biological role, catalyzes the ATP-dependent condensation of GlcN-Ins and L-cysteine to form L-Cys-GlcN-Ins. This is L-cysteine:1D-myo-inositol 2-amino-2-deoxy-alpha-D-glucopyranoside ligase from Rhodococcus erythropolis (strain PR4 / NBRC 100887).